The sequence spans 573 residues: Transcription factor E3 (573 aa).

Phosphoserine; by MTOR is present on S47. Residues 91–151 (TLSASSSAEG…SPAPASPAIS (61 aa)) form a disordered region. Over residues 107 to 126 (SSSSSSRVLLRQQLMRAQAQ) the composition is skewed to low complexity. The span at 127-136 (EQERRERREQ) shows a compositional bias: basic and acidic residues. A compositionally biased stretch (low complexity) spans 137–151 (ASSFPSPAPASPAIS). At R186 the chain carries Asymmetric dimethylarginine. Residues 209–248 (LASQALTPPPGGASVQPLPTPEAAHAPGPTSSAPNSPMAL) form a disordered region. The segment at 258–269 (EIDDVIDEIISL) is strong transcription activation domain. Residue S319 is modified to Phosphoserine; by MTOR. K337 participates in a covalent cross-link: Glycyl lysine isopeptide (Lys-Gly) (interchain with G-Cter in SUMO2). The region spanning 344–397 (QKKDNHNLIERRRRFNINDRIKELGTLIPKSSDPEMRWNKGTILKASVDYIRKL) is the bHLH domain. Residues 354–357 (RRRR) carry the Nuclear localization signal motif. Residues 407 to 428 (LESRQRSLEQANRSLQLRIQEL) are leucine-zipper. The tract at residues 531–573 (VGGLSGGTLSPLRAASDPLLSSVSPAVSKASSRRSSFSMEEES) is disordered. The segment covering 537-573 (GTLSPLRAASDPLLSSVSPAVSKASSRRSSFSMEEES) has biased composition (low complexity). Phosphoserine occurs at positions 540, 546, 552, 554, 558, and 566.

Belongs to the MiT/TFE family. Homodimer and heterodimer; with TFEB or MITF. Interacts with RRAGC/RagC GDP-bound and RRAGD/RagD GDP-bound; promoting its recruitment to lysosomal membrane in the presence of nutrients. Phosphorylation ar Ser-47 and Ser-319 by MTOR via non-canonical mTORC1 pathway regulates its stability and subcellular location, respectively. When nutrients are present, phosphorylation by MTOR at Ser-47 promotes ubiquitination by the SCF(BTRC) complex, followed by degradation. When nutrients are present, phosphorylation by MTOR at Ser-319 also promotes association with 14-3-3/YWHA adapters and retention in the cytosol. Phosphorylation at Ser-47 plays a more critical role than phosphorylation at Ser-319 for TFE3 inactivation. Inhibition of mTORC1, starvation and lysosomal disruption, promotes dephosphorylation and transcription factor activity. In terms of processing, ubiquitinated by the SCF(BTRC) and SCF(FBXW11) complexes following phosphorylation at Ser-47 by MTOR, leading to its degradation by the proteasome. Post-translationally, sumoylated; does not affect dimerization with MITF.

It is found in the cytoplasm. The protein resides in the cytosol. The protein localises to the nucleus. Its subcellular location is the lysosome membrane. Functionally, transcription factor that acts as a master regulator of lysosomal biogenesis and immune response. Specifically recognizes and binds E-box sequences (5'-CANNTG-3'); efficient DNA-binding requires dimerization with itself or with another MiT/TFE family member such as TFEB or MITF. Involved in the cellular response to amino acid availability by acting downstream of MTOR: in the presence of nutrients, TFE3 phosphorylation by MTOR promotes its inactivation. Upon starvation or lysosomal stress, inhibition of MTOR induces TFE3 dephosphorylation, resulting in transcription factor activity. Specifically recognizes and binds the CLEAR-box sequence (5'-GTCACGTGAC-3') present in the regulatory region of many lysosomal genes, leading to activate their expression, thereby playing a central role in expression of lysosomal genes. Maintains the pluripotent state of embryonic stem cells by promoting the expression of genes such as ESRRB; mTOR-dependent TFE3 cytosolic retention and inactivation promotes exit from pluripotency. Required to maintain the naive pluripotent state of hematopoietic stem cell; mTOR-dependent cytoplasmic retention of TFE3 promotes the exit of hematopoietic stem cell from pluripotency. TFE3 activity is also involved in the inhibition of neuronal progenitor differentiation. Acts as a positive regulator of browning of adipose tissue by promoting expression of target genes; mTOR-dependent phosphorylation promotes cytoplasmic retention of TFE3 and inhibits browning of adipose tissue. In association with TFEB, activates the expression of CD40L in T-cells, thereby playing a role in T-cell-dependent antibody responses in activated CD4(+) T-cells and thymus-dependent humoral immunity. Specifically recognizes the MUE3 box, a subset of E-boxes, present in the immunoglobulin enhancer. It also binds very well to a USF/MLTF site. May regulate lysosomal positioning in response to nutrient deprivation by promoting the expression of PIP4P1. The chain is Transcription factor E3 from Bos taurus (Bovine).